Consider the following 335-residue polypeptide: Ubiquinone biosynthesis protein COQ4, mitochondrial (335 aa).

The transit peptide at 1-10 directs the protein to the mitochondrion; the sequence is MLRLSLLRST. Histidine 210, aspartate 211, histidine 214, and glutamate 226 together coordinate Zn(2+).

Belongs to the COQ4 family. Component of a multi-subunit COQ enzyme complex, composed of at least COQ3, COQ4, COQ5, COQ6, COQ7 and COQ9. Interacts with COQ3. Requires Zn(2+) as cofactor.

The protein localises to the mitochondrion inner membrane. The enzyme catalyses 4-hydroxy-3-methoxy-5-(all-trans-hexaprenyl)benzoate + H(+) = 2-methoxy-6-(all-trans-hexaprenyl)phenol + CO2. The protein operates within cofactor biosynthesis; ubiquinone biosynthesis. Functionally, lyase that catalyzes the C1-decarboxylation of 4-hydroxy-3-methoxy-5-(all-trans-hexaprenyl)benzoic acid into 2-methoxy-6-(all-trans-hexaprenyl)phenol during ubiquinone biosynthesis. May play a role in organizing a multi-subunit COQ enzyme complex required for coenzyme Q biosynthesis. Required for steady-state levels of COQ3, COQ4, COQ6, COQ7 and COQ9 polypeptides. In Saccharomyces cerevisiae (strain ATCC 204508 / S288c) (Baker's yeast), this protein is Ubiquinone biosynthesis protein COQ4, mitochondrial.